Consider the following 317-residue polypeptide: NADH-ubiquinone oxidoreductase chain 1 (317 aa).

The next 9 membrane-spanning stretches (helical) occupy residues 3–23, 37–57, 69–89, 103–123, 141–161, 173–193, 207–227, 247–267, and 282–302; these read YIEL…LTVA, PNAV…KLLL, LILF…WSVI, GFIL…LAGW, LISY…IGGT, AIWY…GCVA, SELV…LFFL, GGTG…YIWV, and LCWM…PAYL.

It belongs to the complex I subunit 1 family.

The protein resides in the mitochondrion inner membrane. It carries out the reaction a ubiquinone + NADH + 5 H(+)(in) = a ubiquinol + NAD(+) + 4 H(+)(out). Its function is as follows. Core subunit of the mitochondrial membrane respiratory chain NADH dehydrogenase (Complex I) that is believed to belong to the minimal assembly required for catalysis. Complex I functions in the transfer of electrons from NADH to the respiratory chain. The immediate electron acceptor for the enzyme is believed to be ubiquinone. The polypeptide is NADH-ubiquinone oxidoreductase chain 1 (NAD1) (Candida albicans (strain SC5314 / ATCC MYA-2876) (Yeast)).